The primary structure comprises 313 residues: Ribosomal RNA small subunit methyltransferase H (313 aa).

Residues 33 to 35, Asp53, Phe80, Asp102, and Gln109 contribute to the S-adenosyl-L-methionine site; that span reads GGH. The interval 291–313 is disordered; that stretch reads SDEEMRANPRAQSAKLRAAEKIR.

It belongs to the methyltransferase superfamily. RsmH family.

The protein resides in the cytoplasm. It catalyses the reaction cytidine(1402) in 16S rRNA + S-adenosyl-L-methionine = N(4)-methylcytidine(1402) in 16S rRNA + S-adenosyl-L-homocysteine + H(+). In terms of biological role, specifically methylates the N4 position of cytidine in position 1402 (C1402) of 16S rRNA. The protein is Ribosomal RNA small subunit methyltransferase H of Heliobacterium modesticaldum (strain ATCC 51547 / Ice1).